Consider the following 503-residue polypeptide: Type II secretion system ATPase E (503 aa).

4 residues coordinate Zn(2+): cysteine 397, cysteine 400, cysteine 430, and cysteine 433.

It belongs to the GSP E family. Forms homooligomers; most probably hexamers. Interacts with EpsL/GspL. It depends on Zn(2+) as a cofactor.

The protein localises to the cell inner membrane. It catalyses the reaction ATP + H2O + cellular proteinSide 1 = ADP + phosphate + cellular proteinSide 2.. Its function is as follows. ATPase component of the type II secretion system required for the energy-dependent secretion of extracellular factors such as proteases and toxins from the periplasm. Acts as a molecular motor to provide the energy that is required for assembly of the pseudopilus and the extrusion of substrates generated in the cytoplasm. In Vibrio cholerae serotype O1 (strain ATCC 39315 / El Tor Inaba N16961), this protein is Type II secretion system ATPase E (epsE).